A 410-amino-acid chain; its full sequence is Sensor histidine kinase GlnK (410 aa).

Residues 1 to 15 (MLITVPLAGELKFYP) are Extracellular-facing. A helical transmembrane segment spans residues 16–36 (LNEEFRVSFGAPVFFFFLSLL). The Cytoplasmic portion of the chain corresponds to 37 to 38 (RH). Residues 39-59 (VPAVLPGFLTGAAVFIFRVFL) form a helical membrane-spanning segment. The Extracellular portion of the chain corresponds to 60 to 71 (ELWGGGHNGLTP). A helical membrane pass occupies residues 72–92 (ILYDQASGFFFYMTYACLFSI). At 93-102 (LKANRFRERP) the chain is on the cytoplasmic side. Residues 103 to 123 (IMLGFIGFMIEVVSDCVELTV) traverse the membrane as a helical segment. The Extracellular portion of the chain corresponds to 124-139 (QFLIFHTVVTPEKITD). Residues 140-160 (IAVIAISHTFIVMSFYSVLKL) form a helical membrane-spanning segment. Over 161–410 (YETQSREKQT…LPVRHLIQKG (250 aa)) the chain is Cytoplasmic. The Histidine kinase domain occupies 189-405 (VHLKKTLKTT…VFAIRLPVRH (217 aa)). Histidine 190 carries the post-translational modification Phosphohistidine; by autocatalysis.

As to quaternary structure, homotrimer. Under poor nitrogen source such as nitrate, the complex between GlnK and AmtB, which are the transmembrane ammonium transporter and its cognate regulator, respectively, interacts with TnrA. GlnK-ATP complex are not able to bind TnrA.

It is found in the cell membrane. The enzyme catalyses ATP + protein L-histidine = ADP + protein N-phospho-L-histidine.. Member of the two-component regulatory system GlnK/GlnL that positively regulates the expression of the glsA-glnT operon in response to glutamine. It seems that autophosphorylated GlnK transfers a phosphoryl group to GlnL, which positively regulates the expression of the glsA-glnT operon. Interaction between GlnK-AmtB complex and TnrA protects TnrA from proteolytic degradation. This is Sensor histidine kinase GlnK from Bacillus subtilis (strain 168).